A 557-amino-acid polypeptide reads, in one-letter code: UvrABC system protein C (557 aa).

One can recognise a GIY-YIG domain in the interval E14–V89. One can recognise a UVR domain in the interval E194–V229.

Belongs to the UvrC family. In terms of assembly, interacts with UvrB in an incision complex.

The protein resides in the cytoplasm. Functionally, the UvrABC repair system catalyzes the recognition and processing of DNA lesions. UvrC both incises the 5' and 3' sides of the lesion. The N-terminal half is responsible for the 3' incision and the C-terminal half is responsible for the 5' incision. In Thermotoga sp. (strain RQ2), this protein is UvrABC system protein C.